Consider the following 643-residue polypeptide: Macrolide export ATP-binding/permease protein MacB (643 aa).

The ABC transporter domain occupies I6–H244. Residue G42–S49 coordinates ATP. A run of 4 helical transmembrane segments spans residues V270–G290, L518–M538, F569–L589, and L606–L626.

It belongs to the ABC transporter superfamily. Macrolide exporter (TC 3.A.1.122) family. As to quaternary structure, homodimer.

The protein localises to the cell inner membrane. Non-canonical ABC transporter that contains transmembrane domains (TMD), which form a pore in the inner membrane, and an ATP-binding domain (NBD), which is responsible for energy generation. Confers resistance against macrolides. This Wolinella succinogenes (strain ATCC 29543 / DSM 1740 / CCUG 13145 / JCM 31913 / LMG 7466 / NCTC 11488 / FDC 602W) (Vibrio succinogenes) protein is Macrolide export ATP-binding/permease protein MacB.